Here is a 332-residue protein sequence, read N- to C-terminus: MPNEVYDVTIIGGGPIGLFSAFYSGLRSMKTKIIDAEPAVGGKVRYFFPEKIIRDIGGIPAITGENLVANLKQQAETFHPTIVCSERVVDVTKLADGTFQLTSHNGSIHFSKTIVIATGSGTFEVNKLEALHAEDFPFAIHYDVKNIEQFRDKVVVVSGGGNSAIDWAQTLEPIAKKVHLIYRGEDFKAHEESVRELKNSRVEIHIHHEISELIGTNNQLTEITVCCNQTQTTKTIETEALFINHGVKVDLGTMAEWGFKQADFGIVVDDEMKTTVPGIFACGDSATYPRKIRIIAAGLHEGPIAINSAKKYLEPTAADEAMISTHHESFIG.

Asp35, Lys43, Phe48, Val88, Phe123, Asp284, and Thr325 together coordinate FAD.

Belongs to the ferredoxin--NADP reductase type 2 family. In terms of assembly, homodimer. The cofactor is FAD.

The catalysed reaction is 2 reduced [2Fe-2S]-[ferredoxin] + NADP(+) + H(+) = 2 oxidized [2Fe-2S]-[ferredoxin] + NADPH. The polypeptide is Ferredoxin--NADP reductase 1 (Listeria monocytogenes serovar 1/2a (strain ATCC BAA-679 / EGD-e)).